A 183-amino-acid polypeptide reads, in one-letter code: Endoribonuclease YbeY (183 aa).

Residues His140, His144, and His150 each coordinate Zn(2+).

This sequence belongs to the endoribonuclease YbeY family. It depends on Zn(2+) as a cofactor.

It is found in the cytoplasm. Functionally, single strand-specific metallo-endoribonuclease involved in late-stage 70S ribosome quality control and in maturation of the 3' terminus of the 16S rRNA. The chain is Endoribonuclease YbeY from Bradyrhizobium diazoefficiens (strain JCM 10833 / BCRC 13528 / IAM 13628 / NBRC 14792 / USDA 110).